Reading from the N-terminus, the 339-residue chain is Glycerol-3-phosphate dehydrogenase [NAD(P)+] (339 aa).

Residues Ser-15, Tyr-16, His-36, and Lys-110 each coordinate NADPH. 3 residues coordinate sn-glycerol 3-phosphate: Lys-110, Gly-139, and Thr-141. Position 143 (Ala-143) interacts with NADPH. Positions 195, 248, 258, 259, and 260 each coordinate sn-glycerol 3-phosphate. Lys-195 (proton acceptor) is an active-site residue. Residue Arg-259 participates in NADPH binding. The NADPH site is built by Val-283 and Glu-285.

Belongs to the NAD-dependent glycerol-3-phosphate dehydrogenase family.

It is found in the cytoplasm. The enzyme catalyses sn-glycerol 3-phosphate + NAD(+) = dihydroxyacetone phosphate + NADH + H(+). It carries out the reaction sn-glycerol 3-phosphate + NADP(+) = dihydroxyacetone phosphate + NADPH + H(+). It functions in the pathway membrane lipid metabolism; glycerophospholipid metabolism. Catalyzes the reduction of the glycolytic intermediate dihydroxyacetone phosphate (DHAP) to sn-glycerol 3-phosphate (G3P), the key precursor for phospholipid synthesis. The polypeptide is Glycerol-3-phosphate dehydrogenase [NAD(P)+] (Yersinia pseudotuberculosis serotype O:1b (strain IP 31758)).